Consider the following 205-residue polypeptide: Protein GrpE (205 aa).

The tract at residues lysine 172 to alanine 205 is disordered. The segment covering proline 177–alanine 195 has biased composition (low complexity).

The protein belongs to the GrpE family. In terms of assembly, homodimer.

It is found in the cytoplasm. Its function is as follows. Participates actively in the response to hyperosmotic and heat shock by preventing the aggregation of stress-denatured proteins, in association with DnaK and GrpE. It is the nucleotide exchange factor for DnaK and may function as a thermosensor. Unfolded proteins bind initially to DnaJ; upon interaction with the DnaJ-bound protein, DnaK hydrolyzes its bound ATP, resulting in the formation of a stable complex. GrpE releases ADP from DnaK; ATP binding to DnaK triggers the release of the substrate protein, thus completing the reaction cycle. Several rounds of ATP-dependent interactions between DnaJ, DnaK and GrpE are required for fully efficient folding. The protein is Protein GrpE of Caulobacter sp. (strain K31).